The primary structure comprises 150 residues: Probable deoxyuridine 5'-triphosphate nucleotidohydrolase (150 aa).

It belongs to the dCTP deaminase family. Archaeal dUTPase subfamily.

It catalyses the reaction dUTP + H2O = dUMP + diphosphate + H(+). It functions in the pathway pyrimidine metabolism; dUMP biosynthesis; dUMP from dCTP (dUTP route): step 2/2. Its function is as follows. This enzyme is involved in nucleotide metabolism: it produces dUMP, the immediate precursor of thymidine nucleotides and it decreases the intracellular concentration of dUTP so that uracil cannot be incorporated into DNA. This is Probable deoxyuridine 5'-triphosphate nucleotidohydrolase from Methanothermobacter thermautotrophicus (strain ATCC 29096 / DSM 1053 / JCM 10044 / NBRC 100330 / Delta H) (Methanobacterium thermoautotrophicum).